A 224-amino-acid chain; its full sequence is Uracil-DNA glycosylase (224 aa).

The active-site Proton acceptor is Asp62.

This sequence belongs to the uracil-DNA glycosylase (UDG) superfamily. UNG family.

It localises to the cytoplasm. The enzyme catalyses Hydrolyzes single-stranded DNA or mismatched double-stranded DNA and polynucleotides, releasing free uracil.. Excises uracil residues from the DNA which can arise as a result of misincorporation of dUMP residues by DNA polymerase or due to deamination of cytosine. The sequence is that of Uracil-DNA glycosylase from Aliivibrio salmonicida (strain LFI1238) (Vibrio salmonicida (strain LFI1238)).